Reading from the N-terminus, the 443-residue chain is ATP-dependent protease ATPase subunit HslU (443 aa).

Residues isoleucine 18, 60 to 65 (GVGKTE), aspartate 256, glutamate 321, and arginine 393 each bind ATP.

This sequence belongs to the ClpX chaperone family. HslU subfamily. As to quaternary structure, a double ring-shaped homohexamer of HslV is capped on each side by a ring-shaped HslU homohexamer. The assembly of the HslU/HslV complex is dependent on binding of ATP.

Its subcellular location is the cytoplasm. ATPase subunit of a proteasome-like degradation complex; this subunit has chaperone activity. The binding of ATP and its subsequent hydrolysis by HslU are essential for unfolding of protein substrates subsequently hydrolyzed by HslV. HslU recognizes the N-terminal part of its protein substrates and unfolds these before they are guided to HslV for hydrolysis. This is ATP-dependent protease ATPase subunit HslU from Citrobacter koseri (strain ATCC BAA-895 / CDC 4225-83 / SGSC4696).